The primary structure comprises 320 residues: 1,5-anhydro-D-fructose reductase (320 aa).

An NADP(+)-binding site is contributed by D35. Y40 serves as the catalytic Proton donor. A substrate-binding site is contributed by H102. Residues Q194 and 265–277 (IPGSITPSHIKEN) each bind NADP(+).

Belongs to the aldo/keto reductase family. Monomer. As to expression, specifically expressed in testis. Expressed in testicular germ cells and testis interstitial cells.

The protein localises to the cytoplasm. It carries out the reaction 1,5-anhydro-D-glucitol + NADP(+) = 1,5-anhydro-D-fructose + NADPH + H(+). Inhibited by p-chloromercuribenzoic acid and alkyliodines. Functionally, catalyzes the NADPH-dependent reduction of 1,5-anhydro-D-fructose (AF) to 1,5-anhydro-D-glucitol. Has low NADPH-dependent reductase activity towards 9,10-phenanthrenequinone (in vitro). The protein is 1,5-anhydro-D-fructose reductase (AKR1E2) of Homo sapiens (Human).